Reading from the N-terminus, the 491-residue chain is Phosphoethanolamine N-methyltransferase 1 (491 aa).

An N-acetylalanine modification is found at alanine 2. S-adenosyl-L-homocysteine is bound by residues glycine 61, arginine 66, aspartate 82, aspartate 107, valine 108, and asparagine 126. Positions 159, 164, 165, 169, and 176 each coordinate phosphocholine. Residues 245–246 (QY) and tyrosine 254 each bind N-methylethanolamine phosphate. Phosphocholine is bound at residue tyrosine 254. S-adenosyl-L-homocysteine contacts are provided by valine 263, serine 264, glycine 290, aspartate 312, aspartate 338, cysteine 339, and arginine 355. Tyrosine 386, tyrosine 400, arginine 404, tyrosine 406, and lysine 472 together coordinate phosphocholine. Residues tyrosine 386, tyrosine 400, 404 to 406 (RGY), and lysine 472 each bind N-methylethanolamine phosphate.

Belongs to the class I-like SAM-binding methyltransferase superfamily. PEAMT family. In terms of tissue distribution, highly expressed in the meristem and elongation zones of the root. Expressed in differentiated root epidermal cells. Highly expressed in leaf vasculature.

It is found in the cytoplasm. It carries out the reaction phosphoethanolamine + S-adenosyl-L-methionine = N-methylethanolamine phosphate + S-adenosyl-L-homocysteine + H(+). The enzyme catalyses N-methylethanolamine phosphate + S-adenosyl-L-methionine = N,N-dimethylethanolamine phosphate + S-adenosyl-L-homocysteine + H(+). The catalysed reaction is N,N-dimethylethanolamine phosphate + S-adenosyl-L-methionine = phosphocholine + S-adenosyl-L-homocysteine + H(+). It functions in the pathway phospholipid metabolism; phosphatidylcholine biosynthesis; phosphocholine from phosphoethanolamine: step 1/1. In terms of biological role, involved in phosphocholine biosynthesis. Catalyzes the N-methylation of phosphoethanolamine, phosphomonomethylethanolamine and phosphodimethylethanolamine, the three methylation steps required to convert phosphoethanolamine to phosphocholine (PC). Required for root system development and epidermal cell integrity through its role in choline and phospholipid metabolism. In association with NMT3, regulates PC homeostasis, phase transition at the shoot apex, coordinated organ development, and fertility. In association with NMT3, involved in phosphatidylcholine biosynthesis and vascular development. In association with NMT2, involved in the production of phosphatidylcholine in roots, essential for root development. In association with NMT2 produce phosphocholine mainly for leaf growth maintenance. Contributes to the regulation of overall root zonation dynamics through reactive oxygen species (ROS) and auxin-regulated cell differentiation. Participates in root development of primary root elongation under salt stress conditions by balancing reactive oxygen species (ROS) production and distribution through abscisic acid (ABA) signaling. The protein is Phosphoethanolamine N-methyltransferase 1 of Arabidopsis thaliana (Mouse-ear cress).